A 534-amino-acid chain; its full sequence is MAAHRFSSLLSRSVPLLSRGGKQSYLGRGVYRYGTAAAAALEEPIKPPVSVQYDKLLINGQFVDAASGKTFPTLDPRSGEVIAHVAEGDAEDINRAVAAARKAFDEGPWPKMPAYERQKIMLRFADLVEKHNDEVAALEAWDSGKPYEQCAQVEIPMFVRLFRYYAGWADKIHGLTIPADGPHHVQTLHEPIGVAGQIIPWNFPLVMFGWKVGPALACGNSVVLKTAEQTPLSALLVSKLFHEAGLPEGVLNIVSGFGPTAGAALCRHMDVDKLAFTGSTETGKIVLELSAKSNLKPVTLELGGKSPFIVCEDADVDKAVELAHFALFFNQGQCCCAGSRTFVHEKVYDEFVEKAKARALKRTVGDPFKAGMEQGPQVDADQFEKILKYIRSGAESGATLETGGDRLGTKGYYIQPTVFSDVKDDMLIAKDEIFGPVQTILKFKELDEVIRRANNSSYGLAAGVFTQNLDTANTMMRALRAGTVWINCFDTFDAAIPFGGYKMSGIGREKGEYSLKNYLQVKAVVTALKNPAWL.

The N-terminal 29 residues, 1 to 29, are a transit peptide targeting the mitochondrion; the sequence is MAAHRFSSLLSRSVPLLSRGGKQSYLGRG. NAD(+) contacts are provided by residues 199 to 202, 225 to 228, 258 to 259, 278 to 279, and 301 to 303; these read IPWN, KTAE, GP, GS, and ELG. Glutamate 301 (proton acceptor) is an active-site residue. Cysteine 335 functions as the Nucleophile in the catalytic mechanism. Residues 381–385 and 432–434 contribute to the NAD(+) site; these read DQFEK and EIF.

This sequence belongs to the aldehyde dehydrogenase family. In terms of assembly, homotetramer. In terms of tissue distribution, expressed predominantly in the upper and lower flower petal lobes, and, at low levels, in flower tubes, pistils, stamens and sepals.

Its subcellular location is the mitochondrion. It catalyses the reaction an aldehyde + NAD(+) + H2O = a carboxylate + NADH + 2 H(+). It carries out the reaction acetaldehyde + NAD(+) + H2O = acetate + NADH + 2 H(+). The catalysed reaction is benzaldehyde + NAD(+) + H2O = benzoate + NADH + 2 H(+). The enzyme catalyses 2-phenylacetaldehyde + NAD(+) + H2O = 2-phenylacetate + NADH + 2 H(+). Its pathway is aromatic compound metabolism. Inhibited by disulfiram. Functionally, component of the floral volatile benzenoid/phenylpropanoid (FVBP) biosynthetic pathway. Catalyzes the oxidation of benzaldehyde to benzoic acid (BA). Capable of oxidizing a broad spectrum of aliphatic aldehydes; increased carbon chain length results in a decrease in its efficiency. The chain is Benzaldehyde dehydrogenase, mitochondrial from Antirrhinum majus (Garden snapdragon).